Here is an 89-residue protein sequence, read N- to C-terminus: Myrmicitoxin(1)-Pr2c (89 aa).

The N-terminal stretch at 1–23 is a signal peptide; that stretch reads MEIPKLLYIAVIAIGLSGSLTCA. Residues 24–61 constitute a propeptide that is removed on maturation; sequence TPLANPWADPEAEANPKAKATAEATAEAIAEALAEPEP. Asparagine 88 is subject to Asparagine amide.

This sequence belongs to the formicidae venom clade 1 family. Expressed by the venom gland.

Its subcellular location is the secreted. In terms of biological role, vertebrate-selective toxin that causes pain by targeting voltage-gated sodium channels. The sequence is that of Myrmicitoxin(1)-Pr2c from Pogonomyrmex rugosus (Desert harvester ant).